The chain runs to 200 residues: Small ribosomal subunit protein uS4 (200 aa).

An S4 RNA-binding domain is found at serine 92 to leucine 155.

It belongs to the universal ribosomal protein uS4 family. In terms of assembly, part of the 30S ribosomal subunit. Contacts protein S5. The interaction surface between S4 and S5 is involved in control of translational fidelity.

One of the primary rRNA binding proteins, it binds directly to 16S rRNA where it nucleates assembly of the body of the 30S subunit. Its function is as follows. With S5 and S12 plays an important role in translational accuracy. The protein is Small ribosomal subunit protein uS4 of Shouchella clausii (strain KSM-K16) (Alkalihalobacillus clausii).